The sequence spans 106 residues: Synaptic plasticity regulator PANTS (106 aa).

A disordered region spans residues 67–106 (LQQSEKTRLEGKQNNSPVWTLRKNPPPDWYLPLDPGKPRQ).

The protein belongs to the UPF0545 family. Rapidly degraded by proteolysis following neuronal stimulation, resulting in increased AMPA receptor clustering.

It localises to the synapse. The protein resides in the synaptic cleft. In terms of biological role, negatively regulates long-term potentiation and modulates adult synaptic plasticity. In Xenopus laevis (African clawed frog), this protein is Synaptic plasticity regulator PANTS.